Consider the following 420-residue polypeptide: Histidine--tRNA ligase (420 aa).

The protein belongs to the class-II aminoacyl-tRNA synthetase family. As to quaternary structure, homodimer.

The protein localises to the cytoplasm. It catalyses the reaction tRNA(His) + L-histidine + ATP = L-histidyl-tRNA(His) + AMP + diphosphate + H(+). In Staphylococcus aureus (strain Mu3 / ATCC 700698), this protein is Histidine--tRNA ligase.